Consider the following 41-residue polypeptide: Large ribosomal subunit protein bL36 (41 aa).

This sequence belongs to the bacterial ribosomal protein bL36 family.

The polypeptide is Large ribosomal subunit protein bL36 (Methylobacterium nodulans (strain LMG 21967 / CNCM I-2342 / ORS 2060)).